Consider the following 938-residue polypeptide: Collagen alpha-1(I) chain (938 aa).

The tract at residues 1–938 is disordered; the sequence is GGISVPGPMG…PGPPGPPGPP (938 aa). 4-hydroxyproline occurs at positions 18, 21, 24, 33, 36, 39, 54, 69, 75, 84, and 90. A compositionally biased stretch (low complexity) spans 26-45; it reads PQGFQGPPGEPGEPGASGPM. The segment covering 57–71 has biased composition (basic and acidic residues); it reads NGDDGEAGKPGRPGE. Lys93 carries the post-translational modification 5-hydroxylysine; alternate. Lys93 carries an O-linked (Gal...) hydroxylysine; alternate glycan. Position 99 is a phosphoserine (Ser99). Over residues 107–135 the composition is skewed to low complexity; sequence DAGPAGPKGRPGASGPAGARGNDGATGAA. A 4-hydroxyproline mark is found at Pro117, Pro138, Pro147, Pro150, Pro177, Pro180, Pro192, Pro198, Pro207, Pro213, Pro216, and Pro231. A compositionally biased stretch (pro residues) spans 137 to 149; it reads PPGPTGPAGPPGF. Residues 183 to 222 show a composition bias toward low complexity; that stretch reads AGAAGPAGNPGADGQPGAKGANGAPGIAGAPGFPGARGPS. A 5-hydroxylysine modification is found at Lys234. A 4-hydroxyproline mark is found at Pro240, Pro243, Pro255, Pro264, Pro279, Pro285, Pro294, and Pro300. Over residues 289-298 the composition is skewed to gly residues; the sequence is GERGGPGSRG. Lys309 carries the 5-hydroxylysine modification. Pro314, Pro323, Pro329, Pro335, Pro344, Pro347, Pro356, Pro365, Pro371, Pro383, Pro392, Pro401, Pro404, Pro422, Pro439, Pro445, Pro451, Pro458, Pro464, Pro476, Pro485, Pro497, Pro503, Pro509, and Pro518 each carry 4-hydroxyproline. Over residues 338–364 the composition is skewed to low complexity; it reads KGLTGSPGSPGPDGKTGPPGPAGQDGR. The segment covering 373–392 has biased composition (low complexity); sequence ARGQAGVMGFPGPKGAAGEP. At Lys530 the chain carries 5-hydroxylysine. 4-hydroxyproline is present on residues Pro536, Pro551, and Pro557. Residues 563–577 are compositionally biased toward low complexity; the sequence is SGPSGPAGPTGARGA. Ser566 carries the phosphoserine modification. Pro578, Pro584, Pro587, Pro596, Pro602, Pro620, Pro629, and Pro638 each carry 4-hydroxyproline. A compositionally biased stretch (low complexity) spans 590-617; it reads AGFAGPPGADGQPGAKGEPGDAGAKGDA. Pro residues predominate over residues 619–631; the sequence is PPGPAGPTGPPGP. The residue at position 641 (Lys641) is a 5-hydroxylysine. Residues 646–662 show a composition bias toward low complexity; it reads SAGPPGATGFPGAAGRV. Pro650 and Pro656 each carry 4-hydroxyproline. Pro664 is modified (3-hydroxyproline). A 4-hydroxyproline mark is found at Pro665, Pro674, Pro677, Pro693, Pro703, Pro712, Pro730, Pro739, Pro742, Pro748, Pro763, Pro769, Pro775, Pro784, and Pro790. Over residues 762–772 the composition is skewed to pro residues; the sequence is PPGPMGPPGLA. 5-hydroxylysine is present on Lys799. The span at 807-822 shows a compositional bias: pro residues; it reads PGPPGAPGAPGAPGPV. 4-hydroxyproline occurs at positions 810, 813, and 816. Residues 843-867 are compositionally biased toward low complexity; the sequence is AGPAGARGPAGPQGPRRGFSGLQGP. 4-hydroxyproline is present on residues Pro871, Pro874, Pro892, and Pro907. Over residues 874–907 the composition is skewed to low complexity; sequence PGEQGPSGASGPAGPRGPPGSAGSPGKDGLNGLP. A 3-hydroxyproline modification is found at Pro912. At Pro913 the chain carries 4-hydroxyproline. Pro residues predominate over residues 923-938; that stretch reads VGPPGPPGPPGPPGPP. The residue at position 925 (Pro925) is a 3-hydroxyproline. Pro926 carries the 4-hydroxyproline modification. Pro928 is subject to 3-hydroxyproline. 4-hydroxyproline is present on Pro929. Pro931 carries the 3-hydroxyproline modification. 4-hydroxyproline occurs at positions 932, 935, and 938.

It belongs to the fibrillar collagen family. Trimers of one alpha 2(I) and two alpha 1(I) chains. Post-translationally, contains mostly 4-hydroxyproline. Proline residues at the third position of the tripeptide repeating unit (G-X-Y) are hydroxylated in some or all of the chains. Contains 3-hydroxyproline at a few sites. This modification occurs on the first proline residue in the sequence motif Gly-Pro-Hyp, where Hyp is 4-hydroxyproline. In terms of processing, lysine residues at the third position of the tripeptide repeating unit (G-X-Y) are 5-hydroxylated in some or all of the chains. Post-translationally, O-glycosylated on hydroxylated lysine residues. The O-linked glycan consists of a Glc-Gal disaccharide. In terms of tissue distribution, expressed in bones.

It is found in the secreted. The protein resides in the extracellular space. The protein localises to the extracellular matrix. In terms of biological role, type I collagen is a member of group I collagen (fibrillar forming collagen). This chain is Collagen alpha-1(I) chain, found in Megalonyx jeffersonii (Jefferson's ground sloth).